The chain runs to 181 residues: Ubiquitin-conjugating enzyme E2 19 (181 aa).

Positions 1–10 (MATVNGYTGN) are enriched in polar residues. Positions 1–33 (MATVNGYTGNTPAATTPAATGSKQSAPPTKTVD) are disordered. The segment covering 11–20 (TPAATTPAAT) has biased composition (low complexity). The UBC core domain maps to 36–181 (SVLKRLQSEL…VEKLYKPLNA (146 aa)). The active-site Glycyl thioester intermediate is cysteine 120.

This sequence belongs to the ubiquitin-conjugating enzyme family. In terms of assembly, interacts with OR. Binds to LOT1. As to expression, expressed in all tissues with cell division activities and in mature leaves.

It localises to the cytoplasm. The protein resides in the nucleus. The enzyme catalyses S-ubiquitinyl-[E1 ubiquitin-activating enzyme]-L-cysteine + [E2 ubiquitin-conjugating enzyme]-L-cysteine = [E1 ubiquitin-activating enzyme]-L-cysteine + S-ubiquitinyl-[E2 ubiquitin-conjugating enzyme]-L-cysteine.. It participates in protein modification; protein ubiquitination. Its function is as follows. Accepts the ubiquitin from the E1 complex and catalyzes its covalent attachment to other proteins. Part of the anaphase-promoting complex (APC). May have a key function during cell cycle and be involved in cyclin B1 degradation. Triggers OR ubiquitination that mediates its subsequent nuclear localization. Involved in the repression of early light-induced proteins (ELIPs, e.g. ELIP1 and ELIP2) expression, probably via OR nuclear relocalization. The polypeptide is Ubiquitin-conjugating enzyme E2 19 (Arabidopsis thaliana (Mouse-ear cress)).